The chain runs to 418 residues: CinA-like protein (418 aa).

It belongs to the CinA family.

This chain is CinA-like protein, found in Leptospira interrogans serogroup Icterohaemorrhagiae serovar copenhageni (strain Fiocruz L1-130).